The sequence spans 1289 residues: DNA-directed RNA polymerase subunit beta (1289 aa).

Belongs to the RNA polymerase beta chain family. In terms of assembly, the RNAP catalytic core consists of 2 alpha, 1 beta, 1 beta' and 1 omega subunit. When a sigma factor is associated with the core the holoenzyme is formed, which can initiate transcription.

The enzyme catalyses RNA(n) + a ribonucleoside 5'-triphosphate = RNA(n+1) + diphosphate. In terms of biological role, DNA-dependent RNA polymerase catalyzes the transcription of DNA into RNA using the four ribonucleoside triphosphates as substrates. This Methylacidiphilum infernorum (isolate V4) (Methylokorus infernorum (strain V4)) protein is DNA-directed RNA polymerase subunit beta.